Reading from the N-terminus, the 550-residue chain is Dihydroxy-acid dehydratase (550 aa).

D78 is a binding site for Mg(2+). Residue C119 coordinates [2Fe-2S] cluster. Residues D120 and K121 each coordinate Mg(2+). N6-carboxylysine is present on K121. C191 provides a ligand contact to [2Fe-2S] cluster. A Mg(2+)-binding site is contributed by E440. Residue S466 is the Proton acceptor of the active site.

Belongs to the IlvD/Edd family. As to quaternary structure, homodimer. It depends on [2Fe-2S] cluster as a cofactor. Mg(2+) is required as a cofactor.

It carries out the reaction (2R)-2,3-dihydroxy-3-methylbutanoate = 3-methyl-2-oxobutanoate + H2O. The enzyme catalyses (2R,3R)-2,3-dihydroxy-3-methylpentanoate = (S)-3-methyl-2-oxopentanoate + H2O. It participates in amino-acid biosynthesis; L-isoleucine biosynthesis; L-isoleucine from 2-oxobutanoate: step 3/4. It functions in the pathway amino-acid biosynthesis; L-valine biosynthesis; L-valine from pyruvate: step 3/4. Functionally, functions in the biosynthesis of branched-chain amino acids. Catalyzes the dehydration of (2R,3R)-2,3-dihydroxy-3-methylpentanoate (2,3-dihydroxy-3-methylvalerate) into 2-oxo-3-methylpentanoate (2-oxo-3-methylvalerate) and of (2R)-2,3-dihydroxy-3-methylbutanoate (2,3-dihydroxyisovalerate) into 2-oxo-3-methylbutanoate (2-oxoisovalerate), the penultimate precursor to L-isoleucine and L-valine, respectively. The protein is Dihydroxy-acid dehydratase of Methanococcus maripaludis (strain C7 / ATCC BAA-1331).